Reading from the N-terminus, the 166-residue chain is Interferon gamma (166 aa).

Residues 1–23 form the signal peptide; it reads MKYTSSFLALLLSVLLGFSGSYG. Residue Gln-24 is modified to Pyrrolidone carboxylic acid. N-linked (GlcNAc...) asparagine glycans are attached at residues Asn-39 and Asn-106.

This sequence belongs to the type II (or gamma) interferon family. Homodimer. Interacts with IFNGR1 (via extracellular domain); this interaction promotes IFNGR1 dimerization. In terms of tissue distribution, released primarily from activated T lymphocytes.

It localises to the secreted. Its function is as follows. Type II interferon produced by immune cells such as T-cells and NK cells that plays crucial roles in antimicrobial, antiviral, and antitumor responses by activating effector immune cells and enhancing antigen presentation. Primarily signals through the JAK-STAT pathway after interaction with its receptor IFNGR1 to affect gene regulation. Upon IFNG binding, IFNGR1 intracellular domain opens out to allow association of downstream signaling components JAK2, JAK1 and STAT1, leading to STAT1 activation, nuclear translocation and transcription of IFNG-regulated genes. Many of the induced genes are transcription factors such as IRF1 that are able to further drive regulation of a next wave of transcription. Plays a role in class I antigen presentation pathway by inducing a replacement of catalytic proteasome subunits with immunoproteasome subunits. In turn, increases the quantity, quality, and repertoire of peptides for class I MHC loading. Increases the efficiency of peptide generation also by inducing the expression of activator PA28 that associates with the proteasome and alters its proteolytic cleavage preference. Up-regulates as well MHC II complexes on the cell surface by promoting expression of several key molecules such as cathepsins B/CTSB, H/CTSH, and L/CTSL. Participates in the regulation of hematopoietic stem cells during development and under homeostatic conditions by affecting their development, quiescence, and differentiation. This chain is Interferon gamma (IFNG), found in Capra hircus (Goat).